The chain runs to 595 residues: (E)-beta-ocimene synthase, chloroplastic (595 aa).

The transit peptide at 1–32 (MSTISINLMSIIRNPLHSKSKRALINKHPSSS) directs the protein to the chloroplast. Aspartate 350 and aspartate 354 together coordinate Mn(2+). A DDXXD motif motif is present at residues 350–354 (DDVYD). Homodimerization stretches follow at residues 356–362 (YGTLDEL) and 428–465 (EEEW…LSIP). Mn(2+) contacts are provided by asparagine 493 and glutamate 501.

It belongs to the terpene synthase family. In terms of assembly, homodimer. It depends on Mn(2+) as a cofactor. The cofactor is Mg(2+). In terms of tissue distribution, expressed in peltate glandular trichomes. Present in flowers, leaves and stems.

Its subcellular location is the plastid. The protein resides in the chloroplast. The enzyme catalyses (2E)-geranyl diphosphate = (E)-beta-ocimene + diphosphate. The protein operates within secondary metabolite biosynthesis; terpenoid biosynthesis. Involved in the biosynthesis of monoterpenes natural products. Monoterpene synthase that catalyzes mainly the formation of (E)-beta-ocimene and minor amounts of other monoterpenes (e.g. myrcene, (Z)-beta-ocimene, alpha- and gamma-terpinene) from geranyl diphosphate (GPP). This is (E)-beta-ocimene synthase, chloroplastic from Origanum vulgare (Wild marjoram).